Consider the following 335-residue polypeptide: Basic endochitinase B (335 aa).

Residues 1-33 (MPPQKENHRTLNKMKTNLFLFLIFSLLLSLSSA) form the signal peptide. The Chitin-binding type-1 domain occupies 34–75 (EQCGRQAGGALCPNGLCCSEFGWCGNTEPYCKQPGCQSQCTP). Intrachain disulfides connect cysteine 36/cysteine 51, cysteine 45/cysteine 57, cysteine 50/cysteine 64, cysteine 69/cysteine 73, cysteine 107/cysteine 169, cysteine 181/cysteine 189, and cysteine 288/cysteine 320. Glutamate 151 serves as the catalytic Proton donor. A propeptide spans 329–335 (GLLEAAI) (removed in mature form). The Vacuolar targeting signal signature appears at 329–335 (GLLEAAI).

Belongs to the glycosyl hydrolase 19 family. Chitinase class I subfamily. High constitutive level in roots with lower levels in leaves and flowering shoots.

Its subcellular location is the vacuole. It carries out the reaction Random endo-hydrolysis of N-acetyl-beta-D-glucosaminide (1-&gt;4)-beta-linkages in chitin and chitodextrins.. Defense against chitin-containing fungal pathogens. Seems particularly implicated in resistance to jasmonate-inducing pathogens such as A.brassicicola. In vitro antifungal activity against T.reesei, but not against A.solani, F.oxysporum, S.sclerotiorum, G.graminis and P.megasperma. The chain is Basic endochitinase B (CHI-B) from Arabidopsis thaliana (Mouse-ear cress).